The sequence spans 567 residues: Amino-acid acetyltransferase, mitochondrial (567 aa).

In terms of domain architecture, N-acetyltransferase spans 392–558 (KDSPQTNPLH…ARLKEYAKHI (167 aa)).

The protein belongs to the acetyltransferase family.

The protein localises to the mitochondrion. It carries out the reaction L-glutamate + acetyl-CoA = N-acetyl-L-glutamate + CoA + H(+). Its pathway is amino-acid biosynthesis; L-arginine biosynthesis; N(2)-acetyl-L-ornithine from L-glutamate: step 1/4. Its function is as follows. N-acetylglutamate synthase involved in arginine biosynthesis. This is Amino-acid acetyltransferase, mitochondrial (ARG2) from Vanderwaltozyma polyspora (strain ATCC 22028 / DSM 70294 / BCRC 21397 / CBS 2163 / NBRC 10782 / NRRL Y-8283 / UCD 57-17) (Kluyveromyces polysporus).